A 940-amino-acid polypeptide reads, in one-letter code: Leucine--tRNA ligase, mitochondrial (940 aa).

The 'HIGH' region motif lies at 54-64; that stretch reads PYPSGALHMGH. The 'KMSKS' region signature appears at 638–642; the sequence is TINKL. An ATP-binding site is contributed by lysine 641. The segment at 724–744 is disordered; it reads KEQHQHQQQQHQQPLPSSEFN.

This sequence belongs to the class-I aminoacyl-tRNA synthetase family.

It is found in the mitochondrion. The enzyme catalyses tRNA(Leu) + L-leucine + ATP = L-leucyl-tRNA(Leu) + AMP + diphosphate. This is Leucine--tRNA ligase, mitochondrial (mleuS) from Dictyostelium discoideum (Social amoeba).